A 385-amino-acid polypeptide reads, in one-letter code: Putative UDP-N-acetylglucosamine 2-epimerase (385 aa).

The protein belongs to the UDP-N-acetylglucosamine 2-epimerase family.

Its subcellular location is the cytoplasm. The catalysed reaction is UDP-N-acetyl-alpha-D-glucosamine = UDP-N-acetyl-alpha-D-mannosamine. This is Putative UDP-N-acetylglucosamine 2-epimerase from Clostridium acetobutylicum (strain ATCC 824 / DSM 792 / JCM 1419 / IAM 19013 / LMG 5710 / NBRC 13948 / NRRL B-527 / VKM B-1787 / 2291 / W).